Consider the following 472-residue polypeptide: 3-isopropylmalate dehydratase large subunit (472 aa).

Residues Cys347, Cys407, and Cys410 each contribute to the [4Fe-4S] cluster site.

The protein belongs to the aconitase/IPM isomerase family. LeuC type 1 subfamily. Heterodimer of LeuC and LeuD. [4Fe-4S] cluster serves as cofactor.

The enzyme catalyses (2R,3S)-3-isopropylmalate = (2S)-2-isopropylmalate. It functions in the pathway amino-acid biosynthesis; L-leucine biosynthesis; L-leucine from 3-methyl-2-oxobutanoate: step 2/4. In terms of biological role, catalyzes the isomerization between 2-isopropylmalate and 3-isopropylmalate, via the formation of 2-isopropylmaleate. This is 3-isopropylmalate dehydratase large subunit from Bacillus subtilis (strain 168).